Here is a 159-residue protein sequence, read N- to C-terminus: 2-C-methyl-D-erythritol 2,4-cyclodiphosphate synthase (159 aa).

Positions 10 and 12 each coordinate a divalent metal cation. 4-CDP-2-C-methyl-D-erythritol 2-phosphate is bound by residues 10–12 (DVH) and 36–37 (HS). Position 44 (His44) interacts with a divalent metal cation. 4-CDP-2-C-methyl-D-erythritol 2-phosphate is bound by residues 58-60 (DIG), 134-137 (TTSE), Phe141, and Arg144.

Belongs to the IspF family. Homotrimer. A divalent metal cation serves as cofactor.

The catalysed reaction is 4-CDP-2-C-methyl-D-erythritol 2-phosphate = 2-C-methyl-D-erythritol 2,4-cyclic diphosphate + CMP. It participates in isoprenoid biosynthesis; isopentenyl diphosphate biosynthesis via DXP pathway; isopentenyl diphosphate from 1-deoxy-D-xylulose 5-phosphate: step 4/6. Involved in the biosynthesis of isopentenyl diphosphate (IPP) and dimethylallyl diphosphate (DMAPP), two major building blocks of isoprenoid compounds. Catalyzes the conversion of 4-diphosphocytidyl-2-C-methyl-D-erythritol 2-phosphate (CDP-ME2P) to 2-C-methyl-D-erythritol 2,4-cyclodiphosphate (ME-CPP) with a corresponding release of cytidine 5-monophosphate (CMP). This chain is 2-C-methyl-D-erythritol 2,4-cyclodiphosphate synthase, found in Roseobacter denitrificans (strain ATCC 33942 / OCh 114) (Erythrobacter sp. (strain OCh 114)).